Consider the following 475-residue polypeptide: Aspartyl/glutamyl-tRNA(Asn/Gln) amidotransferase subunit B (475 aa).

The protein belongs to the GatB/GatE family. GatB subfamily. Heterotrimer of A, B and C subunits.

The catalysed reaction is L-glutamyl-tRNA(Gln) + L-glutamine + ATP + H2O = L-glutaminyl-tRNA(Gln) + L-glutamate + ADP + phosphate + H(+). It catalyses the reaction L-aspartyl-tRNA(Asn) + L-glutamine + ATP + H2O = L-asparaginyl-tRNA(Asn) + L-glutamate + ADP + phosphate + 2 H(+). Its function is as follows. Allows the formation of correctly charged Asn-tRNA(Asn) or Gln-tRNA(Gln) through the transamidation of misacylated Asp-tRNA(Asn) or Glu-tRNA(Gln) in organisms which lack either or both of asparaginyl-tRNA or glutaminyl-tRNA synthetases. The reaction takes place in the presence of glutamine and ATP through an activated phospho-Asp-tRNA(Asn) or phospho-Glu-tRNA(Gln). The polypeptide is Aspartyl/glutamyl-tRNA(Asn/Gln) amidotransferase subunit B (Bacillus cereus (strain ATCC 10987 / NRS 248)).